Reading from the N-terminus, the 538-residue chain is Dolichol kinase (538 aa).

Residues 1–18 are Lumenal-facing; it reads MTRECAPPTPGSGAPLSG. A helical membrane pass occupies residues 19–39; it reads SVLAEAAVVFVVVLSIHAAVW. Topologically, residues 40-74 are cytoplasmic; sequence DRYSWCAVALAVQAFYVQYKWDRLLQQGSAVFQFR. A helical membrane pass occupies residues 75-95; that stretch reads MSANSGLLPASVVMPLLGLVM. The Lumenal segment spans residues 96 to 111; sequence KERCQAAGNPYFERFG. The chain crosses the membrane as a helical span at residues 112–132; the sequence is IVVAATGMAVALFSSVLALGI. Residues 133–134 are Cytoplasmic-facing; the sequence is TR. A helical membrane pass occupies residues 135–155; that stretch reads PVPTNTCVISGLAGGVIIYIM. Residues 156–163 lie on the Lumenal side of the membrane; it reads KHSLSVGE. A helical membrane pass occupies residues 164 to 184; that stretch reads VIEVLEALLIFVYLNMILLYL. Residues 185 to 188 lie on the Cytoplasmic side of the membrane; it reads LPRC. The chain crosses the membrane as a helical span at residues 189–209; the sequence is FTPGEALLVLGGISFMLNQLI. Over 210-224 the chain is Lumenal; that stretch reads KRSLTVVESQGDPLD. A helical transmembrane segment spans residues 225 to 245; that stretch reads FFLLVVVVGMVLMGIFFSTLF. The Cytoplasmic segment spans residues 246–254; that stretch reads VFMDSGTWA. The helical transmembrane segment at 255–275 threads the bilayer; it reads SSIFFHLMTCVLGLGVVLPWL. The Lumenal segment spans residues 276-297; that stretch reads HRLIRRNPLLWLFQFLFQTETR. A helical transmembrane segment spans residues 298 to 318; the sequence is VYLLAYWCLLATVACLVVLYQ. Residues 319–337 lie on the Cytoplasmic side of the membrane; that stretch reads NAKRSSSESKKHQAPTITR. The helical transmembrane segment at 338–354 threads the bilayer; that stretch reads KYFHFIVVATYIPGIIL. Over 355 to 359 the chain is Lumenal; that stretch reads DRPLL. A helical transmembrane segment spans residues 360-380; that stretch reads YVAATVCLAVFIFLEYVRYFR. The Cytoplasmic portion of the chain corresponds to 381 to 401; sequence IKPLGHTLRSLLSLFLDERDS. A helical membrane pass occupies residues 402–422; the sequence is GPLILTHIYLLLGMSLPIWLV. Residues 423-436 lie on the Lumenal side of the membrane; it reads PRPCTQKGSLGGAR. Residues 437–457 traverse the membrane as a helical segment; the sequence is ALVPYAGVLAVGVGDTVASIF. Residues 458–472 are Cytoplasmic-facing; the sequence is GSTMGEIRWPGTKKT. The interval 459–474 is CTP-binding; it reads STMGEIRWPGTKKTFE. A helical transmembrane segment spans residues 473-493; that stretch reads FEGTMTSIFAQIISVALILIF. Topologically, residues 494 to 495 are lumenal; that stretch reads DS. A helical transmembrane segment spans residues 496-516; the sequence is GVDLNYSYAWILGSISTVSLL. Residues 517–538 lie on the Cytoplasmic side of the membrane; the sequence is EAYTTQIDNLLLPLYLLILLMA.

It belongs to the polyprenol kinase family.

It localises to the endoplasmic reticulum membrane. The enzyme catalyses a di-trans,poly-cis-dolichol + CTP = a di-trans,poly-cis-dolichyl phosphate + CDP + H(+). It participates in protein modification; protein glycosylation. Functionally, catalyzes CTP-mediated phosphorylation of dolichol, the terminal step in de novo dolichyl monophosphate (Dol-P) biosynthesis. Dol-P is a lipid carrier essential for the synthesis of N-linked and O-linked oligosaccharides and for GPI anchors. The protein is Dolichol kinase (DOLK) of Bos taurus (Bovine).